Here is a 310-residue protein sequence, read N- to C-terminus: Protoheme IX farnesyltransferase (310 aa).

The next 9 membrane-spanning stretches (helical) occupy residues 26-45, 49-71, 95-115, 118-138, 147-167, 174-194, 220-240, 243-263, and 289-309; these read VMSL…PVTV, IALT…NMWW, GEAL…LGLA, LFAA…YSMW, IVIG…VATG, LFMF…LALF, VLVY…TGIG, LYLA…VRIW, and LFLH…GLGG.

It belongs to the UbiA prenyltransferase family. Protoheme IX farnesyltransferase subfamily. As to quaternary structure, interacts with CtaA.

It localises to the cell inner membrane. The enzyme catalyses heme b + (2E,6E)-farnesyl diphosphate + H2O = Fe(II)-heme o + diphosphate. It participates in porphyrin-containing compound metabolism; heme O biosynthesis; heme O from protoheme: step 1/1. In terms of biological role, converts heme B (protoheme IX) to heme O by substitution of the vinyl group on carbon 2 of heme B porphyrin ring with a hydroxyethyl farnesyl side group. This chain is Protoheme IX farnesyltransferase, found in Cereibacter sphaeroides (strain ATCC 17029 / ATH 2.4.9) (Rhodobacter sphaeroides).